We begin with the raw amino-acid sequence, 198 residues long: Holliday junction branch migration complex subunit RuvA (198 aa).

The tract at residues 1–64 is domain I; sequence MYEYIKGEYM…EDFIGLYGFE (64 aa). The interval 65–143 is domain II; it reads SLEELEMFKM…TDELLNCIDE (79 aa). Residues 144–154 form a flexible linker region; sequence FDDVTQDNSLA. Residues 154–198 are domain III; that stretch reads AVSEALSALISLGYTEKEAEKVLRDVDKSESVENIIKSALVKLMG.

It belongs to the RuvA family. In terms of assembly, homotetramer. Forms an RuvA(8)-RuvB(12)-Holliday junction (HJ) complex. HJ DNA is sandwiched between 2 RuvA tetramers; dsDNA enters through RuvA and exits via RuvB. An RuvB hexamer assembles on each DNA strand where it exits the tetramer. Each RuvB hexamer is contacted by two RuvA subunits (via domain III) on 2 adjacent RuvB subunits; this complex drives branch migration. In the full resolvosome a probable DNA-RuvA(4)-RuvB(12)-RuvC(2) complex forms which resolves the HJ.

It localises to the cytoplasm. The RuvA-RuvB-RuvC complex processes Holliday junction (HJ) DNA during genetic recombination and DNA repair, while the RuvA-RuvB complex plays an important role in the rescue of blocked DNA replication forks via replication fork reversal (RFR). RuvA specifically binds to HJ cruciform DNA, conferring on it an open structure. The RuvB hexamer acts as an ATP-dependent pump, pulling dsDNA into and through the RuvAB complex. HJ branch migration allows RuvC to scan DNA until it finds its consensus sequence, where it cleaves and resolves the cruciform DNA. This chain is Holliday junction branch migration complex subunit RuvA, found in Clostridium botulinum (strain Eklund 17B / Type B).